Here is a 311-residue protein sequence, read N- to C-terminus: GTP cyclohydrolase MptA (311 aa).

Belongs to the GTP cyclohydrolase IV family. In terms of assembly, homodimer. Fe(2+) is required as a cofactor.

It catalyses the reaction GTP + H2O = 7,8-dihydroneopterin 2',3'-cyclic phosphate + formate + diphosphate + H(+). It participates in cofactor biosynthesis; 5,6,7,8-tetrahydromethanopterin biosynthesis. Converts GTP to 7,8-dihydro-D-neopterin 2',3'-cyclic phosphate, the first intermediate in the biosynthesis of coenzyme methanopterin. In Halobacterium salinarum (strain ATCC 29341 / DSM 671 / R1), this protein is GTP cyclohydrolase MptA.